Here is a 275-residue protein sequence, read N- to C-terminus: MARFALTIVRHGETRYNKEKLLQGQGIDEPLSEIGFKQADAVGRFLSNVRFTHVFSSDLIRAKQTACAIMENNKISEDIKIIYDRRLRERKYGDAEGRPLSELKVMAKKAGDQCPSYTPPGGETLEQVRARAKDFFEYLCRLVLEESSAKEQSELGASGMGGVTSADLGPFVNHNKEPAELGESRDVTVHASVLLVSHGAYMRNWIKYLVEDLQFTFPPELKKSRELPVSPNTGISHFIVTVSSATPRKPEIQCVCINLHSHLSDINADTSHYQV.

His-11 acts as the Tele-phosphohistidine intermediate in catalysis. The active-site Proton donor/acceptor is the Glu-89.

It belongs to the phosphoglycerate mutase family.

The protein resides in the cytoplasm. Its subcellular location is the nucleus. It is found in the mitochondrion. It carries out the reaction beta-D-fructose 2,6-bisphosphate + H2O = beta-D-fructose 6-phosphate + phosphate. Its function is as follows. Fructose-bisphosphatase hydrolyzing fructose-2,6-bisphosphate as well as fructose-1,6-bisphosphate. Acts as a negative regulator of glycolysis by lowering intracellular levels of fructose-2,6-bisphosphate in a p53/TP53-dependent manner, resulting in the pentose phosphate pathway (PPP) activation and NADPH production. Contributes to the generation of reduced glutathione to cause a decrease in intracellular reactive oxygen species (ROS) content, correlating with its ability to protect cells from oxidative or metabolic stress-induced cell death. May play a role in mitophagy inhibition. The sequence is that of Fructose-2,6-bisphosphatase TIGAR from Xenopus tropicalis (Western clawed frog).